We begin with the raw amino-acid sequence, 502 residues long: Glycerol kinase (502 aa).

T14 is an ADP binding site. Positions 14, 15, and 16 each coordinate ATP. T14 lines the sn-glycerol 3-phosphate pocket. R18 provides a ligand contact to ADP. Sn-glycerol 3-phosphate contacts are provided by R84, E85, Y136, and D246. 5 residues coordinate glycerol: R84, E85, Y136, D246, and Q247. Residues T268 and G311 each coordinate ADP. 4 residues coordinate ATP: T268, G311, Q315, and G412. ADP contacts are provided by G412 and N416.

The protein belongs to the FGGY kinase family. In terms of assembly, homotetramer and homodimer (in equilibrium). Heterodimer with EIIA-Glc. Binds 1 zinc ion per glycerol kinase EIIA-Glc dimer. The zinc ion is important for dimerization.

It carries out the reaction glycerol + ATP = sn-glycerol 3-phosphate + ADP + H(+). The protein operates within polyol metabolism; glycerol degradation via glycerol kinase pathway; sn-glycerol 3-phosphate from glycerol: step 1/1. Activity of this regulatory enzyme is affected by several metabolites. Allosterically and non-competitively inhibited by fructose 1,6-bisphosphate (FBP) and unphosphorylated phosphocarrier protein EIIA-Glc (III-Glc), an integral component of the bacterial phosphotransferase (PTS) system. Functionally, key enzyme in the regulation of glycerol uptake and metabolism. Catalyzes the phosphorylation of glycerol to yield sn-glycerol 3-phosphate. The sequence is that of Glycerol kinase from Salmonella agona (strain SL483).